The chain runs to 480 residues: tRNA-2-methylthio-N(6)-dimethylallyladenosine synthase (480 aa).

One can recognise an MTTase N-terminal domain in the interval 25–145 (GVFYVHTLGC…LPQLLDQARI (121 aa)). The [4Fe-4S] cluster site is built by Cys-34, Cys-74, Cys-108, Cys-182, Cys-186, and Cys-189. The 230-residue stretch at 168 to 397 (RASKVSSWVA…VALQERITEE (230 aa)) folds into the Radical SAM core domain. The TRAM domain maps to 400-470 (KTFEGRDVEV…RHNLIADPNP (71 aa)).

The protein belongs to the methylthiotransferase family. MiaB subfamily. As to quaternary structure, monomer. It depends on [4Fe-4S] cluster as a cofactor.

Its subcellular location is the cytoplasm. The enzyme catalyses N(6)-dimethylallyladenosine(37) in tRNA + (sulfur carrier)-SH + AH2 + 2 S-adenosyl-L-methionine = 2-methylsulfanyl-N(6)-dimethylallyladenosine(37) in tRNA + (sulfur carrier)-H + 5'-deoxyadenosine + L-methionine + A + S-adenosyl-L-homocysteine + 2 H(+). Functionally, catalyzes the methylthiolation of N6-(dimethylallyl)adenosine (i(6)A), leading to the formation of 2-methylthio-N6-(dimethylallyl)adenosine (ms(2)i(6)A) at position 37 in tRNAs that read codons beginning with uridine. The chain is tRNA-2-methylthio-N(6)-dimethylallyladenosine synthase from Bifidobacterium adolescentis (strain ATCC 15703 / DSM 20083 / NCTC 11814 / E194a).